The following is a 585-amino-acid chain: MSATSVDQRPKGQGNKVSVQNGSIHQKDAVNDDDFEPYLSSQTNQSNSYPPMSDPYMPSYYAPSIGFPYSLGEAAWSTAGDQPMPYLTTYGQMSNGEHHYIPDGVFSQPGALGNTPPFLGQHGFNFFPGNADFSTWGTSGSQGQSTQSSAYSSSYGYPPSSLGRAITDGQAGFGNDTLSKVPGISSIEQGMTGLKIGGDLTAAVTKTVGTALSSSGMTSIATNSVPPVSSAAPKPTSWAAIARKPAKPQPKLKPKGNVGIGGSAVPPPPIKHNMNIGTWDEKGSVVKAPPTQPVLPPQTIIQQPQPLIQPPPLVQSQLPQQQPQPPQPQQQQGPQPQAQPHQVQPQQQQLQNRWVAPRNRGAGFNQNNGAGSENFGLGVVPVSASPSSVEVHPVLEKLKAINNYNPKDFDWNLKNGRVFIIKSYSEDDIHRSIKYSIWCSTEHGNKRLDAAYRSLNGKGPLYLLFSVNGSGHFCGVAEMKSVVDYNAYAGVWSQDKWKGKFEVKWIFVKDVPNNQLRHIRLENNDNKPVTNSRDTQEVPLEKAKQVLKIIATFKHTTSIFDDFAHYEKRQEEEEAMRRERNRNKQ.

3 disordered regions span residues 1 to 52 (MSAT…YPPM), 243 to 277 (RKPA…MNIG), and 304 to 351 (PQPL…QQLQ). Residue serine 2 is modified to N-acetylserine. Positions 15–24 (NKVSVQNGSI) are enriched in polar residues. Residue serine 23 is modified to Phosphoserine. The segment covering 244–254 (KPAKPQPKLKP) has biased composition (basic residues). Low complexity predominate over residues 329–351 (QQQQGPQPQAQPHQVQPQQQQLQ). Positions 416 to 550 (GRVFIIKSYS…EKAKQVLKII (135 aa)) constitute a YTH domain. RNA contacts are provided by residues 422–424 (KSY), aspartate 428, 438–439 (WC), asparagine 468, tryptophan 492, and tryptophan 497.

The protein belongs to the YTHDF family. YTHDF3 subfamily. As to quaternary structure, interacts with CNOT1; promoting recruitment of the CCR4-NOT complex. Interacts with YTHDF1. Interacts with YTHDF2. Interacts with PAN3. Post-translationally, (Microbial infection) Proteolytically cleaved by HIV-1 protease when incorporated into HIV-1 particles in a nucleocapsid-dependent-manner. Cleavage by HIV-1 protease probably ensures optimal infectivity of the mature virion.

The protein resides in the cytoplasm. It localises to the cytosol. Its subcellular location is the P-body. The protein localises to the stress granule. Specifically recognizes and binds N6-methyladenosine (m6A)-containing RNAs, and regulates their stability. M6A is a modification present at internal sites of mRNAs and some non-coding RNAs and plays a role in mRNA stability and processing. Acts as a regulator of mRNA stability by promoting degradation of m6A-containing mRNAs via interaction with the CCR4-NOT complex or PAN3. The YTHDF paralogs (YTHDF1, YTHDF2 and YTHDF3) share m6A-containing mRNAs targets and act redundantly to mediate mRNA degradation and cellular differentiation. Acts as a negative regulator of type I interferon response by down-regulating interferon-stimulated genes (ISGs) expression: acts by binding to FOXO3 mRNAs. Binds to FOXO3 mRNAs independently of METTL3-mediated m6A modification. Can also act as a regulator of mRNA stability in cooperation with YTHDF2 by binding to m6A-containing mRNA and promoting their degradation. Recognizes and binds m6A-containing circular RNAs (circRNAs); circRNAs are generated through back-splicing of pre-mRNAs, a non-canonical splicing process promoted by dsRNA structures across circularizing exons. Promotes formation of phase-separated membraneless compartments, such as P-bodies or stress granules, by undergoing liquid-liquid phase separation upon binding to mRNAs containing multiple m6A-modified residues: polymethylated mRNAs act as a multivalent scaffold for the binding of YTHDF proteins, juxtaposing their disordered regions and thereby leading to phase separation. The resulting mRNA-YTHDF complexes then partition into different endogenous phase-separated membraneless compartments, such as P-bodies, stress granules or neuronal RNA granules. May also recognize and bind N1-methyladenosine (m1A)-containing mRNAs: inhibits trophoblast invasion by binding to m1A-methylated transcripts of IGF1R, promoting their degradation. Functionally, has some antiviral activity against HIV-1 virus: incorporated into HIV-1 particles in a nucleocapsid-dependent manner and reduces viral infectivity in the next cycle of infection. May interfere with this early step of the viral life cycle by binding to N6-methyladenosine (m6A) modified sites on the HIV-1 RNA genome. The sequence is that of YTH domain-containing family protein 3 from Homo sapiens (Human).